The primary structure comprises 662 residues: Bifunctional polymyxin resistance protein ArnA (662 aa).

A formyltransferase ArnAFT region spans residues 1-307; the sequence is MTSKAVVFAY…ELGLVEGARL (307 aa). Histidine 106 acts as the Proton donor; for formyltransferase activity in catalysis. Residues arginine 116 and 138–142 contribute to the (6R)-10-formyltetrahydrofolate site; that span reads IERAD. A dehydrogenase ArnADH region spans residues 316-662; it reads RRTRVLILGV…EALREREAQA (347 aa). NAD(+) is bound by residues aspartate 349 and 370 to 371; that span reads DI. UDP-alpha-D-glucuronate contacts are provided by residues alanine 395, tyrosine 400, and 434–435; that span reads TS. Glutamate 436 functions as the Proton acceptor; for decarboxylase activity in the catalytic mechanism. Residues arginine 462, asparagine 493, 527–536, and tyrosine 614 contribute to the UDP-alpha-D-glucuronate site; that span reads RLVDGGAQKR. Arginine 620 serves as the catalytic Proton donor; for decarboxylase activity.

It in the N-terminal section; belongs to the Fmt family. UDP-L-Ara4N formyltransferase subfamily. In the C-terminal section; belongs to the NAD(P)-dependent epimerase/dehydratase family. UDP-glucuronic acid decarboxylase subfamily. Homohexamer, formed by a dimer of trimers.

It catalyses the reaction UDP-alpha-D-glucuronate + NAD(+) = UDP-beta-L-threo-pentopyranos-4-ulose + CO2 + NADH. It carries out the reaction UDP-4-amino-4-deoxy-beta-L-arabinose + (6R)-10-formyltetrahydrofolate = UDP-4-deoxy-4-formamido-beta-L-arabinose + (6S)-5,6,7,8-tetrahydrofolate + H(+). The protein operates within nucleotide-sugar biosynthesis; UDP-4-deoxy-4-formamido-beta-L-arabinose biosynthesis; UDP-4-deoxy-4-formamido-beta-L-arabinose from UDP-alpha-D-glucuronate: step 1/3. It participates in nucleotide-sugar biosynthesis; UDP-4-deoxy-4-formamido-beta-L-arabinose biosynthesis; UDP-4-deoxy-4-formamido-beta-L-arabinose from UDP-alpha-D-glucuronate: step 3/3. Its pathway is bacterial outer membrane biogenesis; lipopolysaccharide biosynthesis. Its function is as follows. Bifunctional enzyme that catalyzes the oxidative decarboxylation of UDP-glucuronic acid (UDP-GlcUA) to UDP-4-keto-arabinose (UDP-Ara4O) and the addition of a formyl group to UDP-4-amino-4-deoxy-L-arabinose (UDP-L-Ara4N) to form UDP-L-4-formamido-arabinose (UDP-L-Ara4FN). The modified arabinose is attached to lipid A and is required for resistance to polymyxin and cationic antimicrobial peptides. This Pseudomonas aeruginosa (strain LESB58) protein is Bifunctional polymyxin resistance protein ArnA.